The following is a 228-amino-acid chain: Cytidylate kinase (228 aa).

17–25 (GPTASGKGT) contributes to the ATP binding site.

Belongs to the cytidylate kinase family. Type 1 subfamily.

It is found in the cytoplasm. It catalyses the reaction CMP + ATP = CDP + ADP. The enzyme catalyses dCMP + ATP = dCDP + ADP. The protein is Cytidylate kinase of Burkholderia pseudomallei (strain 1106a).